The chain runs to 77 residues: Apidermin 2 (77 aa).

Positions 1 to 16 are cleaved as a signal peptide; it reads MKSLLILFAIVAVVAA.

Expressed in the epidermis, hypopharyngeal glands, fat body, trachea, esophagus and stomach.

Its subcellular location is the secreted. Its function is as follows. Antimicrobial peptide that binds cell wall carbohydrates of microbial symbionts and induces structural damage. Binds the cell wall carbohydrates mannan, N-acetyl-D-glucosamine and lipopolysaccharide. Can target fungi, Gram-negative and Gram-positive bacteria. The chain is Apidermin 2 from Apis mellifera (Honeybee).